Consider the following 458-residue polypeptide: 5-hydroxytryptamine receptor 2C (458 aa).

The signal sequence occupies residues 1-32; that stretch reads MVNLRNAVHSFLVHLIGLLVWQCDISVSPVAA. Residues 33-55 are Extracellular-facing; it reads IVTDIFNTSDGGRFKFPDGVQNW. A helical membrane pass occupies residues 56 to 80; sequence PALSIVVIIIMTIGGNILVIMAVSM. Residues 81-86 lie on the Cytoplasmic side of the membrane; the sequence is EKKLHN. A helical transmembrane segment spans residues 87-111; it reads ATNYFLMSLAIADMLVGLLVMPLSL. Over 112-128 the chain is Extracellular; sequence LAILYDYVWPLPRYLCP. Cys127 and Cys207 are disulfide-bonded. A helical transmembrane segment spans residues 129–151; sequence VWISLDVLFSTASIMHLCAISLD. Thr139 provides a ligand contact to ergotamine. The short motif at 151–153 is the DRY motif; important for ligand-induced conformation changes element; the sequence is DRY. Residues 152–167 lie on the Cytoplasmic side of the membrane; it reads RYVAIRNPIEHSRFNS. A helical transmembrane segment spans residues 168–189; the sequence is RTKAIMKIAIVWAISIGVSVPI. At 190-213 the chain is on the extracellular side; the sequence is PVIGLRDERKVFVNNTTCVLNDPN. Ergotamine is bound at residue Leu209. The chain crosses the membrane as a helical span at residues 214–236; it reads FVLIGSFVAFFIPLTIMVITYCL. The Cytoplasmic portion of the chain corresponds to 237–311; that stretch reads TIYVLRRQAL…AINNERKASK (75 aa). The interval 274–301 is disordered; sequence EENSANPNQDQNARRRKKKERRPRGTMQ. The span at 287–297 shows a compositional bias: basic residues; that stretch reads RRRKKKERRPR. Residues 312–336 form a helical membrane-spanning segment; sequence VLGIVFFVFLIMWCPFFITNILSVL. A disulfide bond links Cys337 and Cys341. The Extracellular portion of the chain corresponds to 337–347; it reads CEKSCNQKLME. A helical transmembrane segment spans residues 348–370; sequence KLLNVFVWIGYVCSGINPLVYTL. Residues 364–368 carry the NPxxY motif; important for ligand-induced conformation changes and signaling motif; the sequence is NPLVY. At 371-458 the chain is on the cytoplasmic side; that stretch reads FNKIYRRAFS…SVVSERISSV (88 aa). Residues 456–458 carry the PDZ-binding motif; the sequence is SSV.

Belongs to the G-protein coupled receptor 1 family. Interacts with MPDZ. Interacts with ARRB2. Interacts with MPP3; this interaction stabilizes the receptor at the plasma membrane and prevents the desensitization of the HTR2C receptor-mediated calcium response.

Its subcellular location is the cell membrane. Its function is as follows. G-protein coupled receptor for 5-hydroxytryptamine (serotonin). Also functions as a receptor for various drugs and psychoactive substances, including ergot alkaloid derivatives, 1-2,5,-dimethoxy-4-iodophenyl-2-aminopropane (DOI) and lysergic acid diethylamide (LSD). Ligand binding causes a conformation change that triggers signaling via guanine nucleotide-binding proteins (G proteins) and modulates the activity of downstream effectors. HTR2C is coupled to G(q)/G(11) G alpha proteins and activates phospholipase C-beta, releasing diacylglycerol (DAG) and inositol 1,4,5-trisphosphate (IP3) second messengers that modulate the activity of phosphatidylinositol 3-kinase and promote the release of Ca(2+) ions from intracellular stores, respectively. Beta-arrestin family members inhibit signaling via G proteins and mediate activation of alternative signaling pathways. Regulates neuronal activity via the activation of short transient receptor potential calcium channels in the brain, and thereby modulates the activation of pro-opiomelanocortin neurons and the release of CRH that then regulates the release of corticosterone. Plays a role in the regulation of appetite and eating behavior, responses to anxiogenic stimuli and stress. Plays a role in insulin sensitivity and glucose homeostasis. This is 5-hydroxytryptamine receptor 2C from Pan troglodytes (Chimpanzee).